Consider the following 486-residue polypeptide: Cardiolipin synthase A (486 aa).

A run of 2 helical transmembrane segments spans residues threonine 3 to valine 23 and methionine 38 to phenylalanine 58. PLD phosphodiesterase domains follow at residues methionine 219–arginine 246 and glutamate 399–serine 426. Active-site residues include histidine 224, lysine 226, aspartate 231, histidine 404, lysine 406, and aspartate 411.

The protein belongs to the phospholipase D family. Cardiolipin synthase subfamily. ClsA sub-subfamily.

It localises to the cell inner membrane. The enzyme catalyses 2 a 1,2-diacyl-sn-glycero-3-phospho-(1'-sn-glycerol) = a cardiolipin + glycerol. Catalyzes the reversible phosphatidyl group transfer from one phosphatidylglycerol molecule to another to form cardiolipin (CL) (diphosphatidylglycerol) and glycerol. The polypeptide is Cardiolipin synthase A (Citrobacter koseri (strain ATCC BAA-895 / CDC 4225-83 / SGSC4696)).